Consider the following 486-residue polypeptide: Glutamyl-tRNA(Gln) amidotransferase subunit A (486 aa).

Catalysis depends on charge relay system residues Lys79 and Ser154. Ser178 (acyl-ester intermediate) is an active-site residue.

The protein belongs to the amidase family. GatA subfamily. In terms of assembly, heterotrimer of A, B and C subunits.

The catalysed reaction is L-glutamyl-tRNA(Gln) + L-glutamine + ATP + H2O = L-glutaminyl-tRNA(Gln) + L-glutamate + ADP + phosphate + H(+). In terms of biological role, allows the formation of correctly charged Gln-tRNA(Gln) through the transamidation of misacylated Glu-tRNA(Gln) in organisms which lack glutaminyl-tRNA synthetase. The reaction takes place in the presence of glutamine and ATP through an activated gamma-phospho-Glu-tRNA(Gln). The protein is Glutamyl-tRNA(Gln) amidotransferase subunit A of Dehalococcoides mccartyi (strain ATCC BAA-2266 / KCTC 15142 / 195) (Dehalococcoides ethenogenes (strain 195)).